A 244-amino-acid polypeptide reads, in one-letter code: Cytochrome c1 (244 aa).

An N-terminal signal peptide occupies residues 1 to 19; sequence MRKLILATFLLLAPTALLA. Heme c is bound by residues C50, C53, and H54. Residues 220–240 traverse the membrane as a helical segment; it reads YVLLFLGFLFILAYLLKKEYW.

In terms of assembly, the main subunits of complex b-c1 are: cytochrome b, cytochrome c1 and the Rieske protein. Binds 1 heme c group covalently per subunit.

Its subcellular location is the cell membrane. Component of the ubiquinol-cytochrome c reductase complex (complex III or cytochrome b-c1 complex), which is a respiratory chain that generates an electrochemical potential coupled to ATP synthesis. c1 functions as an electron donor to cytochrome c. The chain is Cytochrome c1 (petC) from Allochromatium vinosum (strain ATCC 17899 / DSM 180 / NBRC 103801 / NCIMB 10441 / D) (Chromatium vinosum).